The primary structure comprises 140 residues: Resuscitation-promoting factor RpfC (140 aa).

The N-terminal stretch at 1–31 is a signal peptide; sequence MTRIAKPLIKSAMAAGLVTASMSLSTAVAHA.

It belongs to the transglycosylase family. Rpf subfamily.

It localises to the secreted. Factor that stimulates resuscitation of dormant cells. Has peptidoglycan (PG) hydrolytic activity. This Mycobacterium tuberculosis (strain ATCC 35801 / TMC 107 / Erdman) protein is Resuscitation-promoting factor RpfC (rpfC).